The chain runs to 237 residues: uncharacterized protein (237 aa).

Position 21–28 (glycine 21–serine 28) interacts with ATP.

The protein to E.coli YghR and YghT.

This is an uncharacterized protein from Escherichia coli (strain K12).